We begin with the raw amino-acid sequence, 933 residues long: 2-oxoglutarate dehydrogenase E1 component (933 aa).

Belongs to the alpha-ketoglutarate dehydrogenase family. Homodimer. Part of the 2-oxoglutarate dehydrogenase (OGDH) complex composed of E1 (2-oxoglutarate dehydrogenase), E2 (dihydrolipoamide succinyltransferase) and E3 (dihydrolipoamide dehydrogenase); the complex contains multiple copies of the three enzymatic components (E1, E2 and E3). The cofactor is thiamine diphosphate.

It catalyses the reaction N(6)-[(R)-lipoyl]-L-lysyl-[protein] + 2-oxoglutarate + H(+) = N(6)-[(R)-S(8)-succinyldihydrolipoyl]-L-lysyl-[protein] + CO2. E1 component of the 2-oxoglutarate dehydrogenase (OGDH) complex which catalyzes the decarboxylation of 2-oxoglutarate, the first step in the conversion of 2-oxoglutarate to succinyl-CoA and CO(2). This is 2-oxoglutarate dehydrogenase E1 component (sucA) from Rickettsia typhi (strain ATCC VR-144 / Wilmington).